Reading from the N-terminus, the 142-residue chain is Large ribosomal subunit protein uL13 (142 aa).

It belongs to the universal ribosomal protein uL13 family. Part of the 50S ribosomal subunit.

Its function is as follows. This protein is one of the early assembly proteins of the 50S ribosomal subunit, although it is not seen to bind rRNA by itself. It is important during the early stages of 50S assembly. This Citrobacter koseri (strain ATCC BAA-895 / CDC 4225-83 / SGSC4696) protein is Large ribosomal subunit protein uL13.